Reading from the N-terminus, the 389-residue chain is Cytochrome b (389 aa).

The next 4 helical transmembrane spans lie at Phe32–Met52, Trp76–Gly98, Leu113–Val133, and Phe179–Met199. Heme b contacts are provided by His82 and His96. Heme b contacts are provided by His183 and His197. His202 lines the a ubiquinone pocket. Helical transmembrane passes span Phe225–Phe245, Leu289–Asp309, Ala321–Ser341, and Tyr348–Pro368.

Belongs to the cytochrome b family. In terms of assembly, fungal cytochrome b-c1 complex contains 10 subunits; 3 respiratory subunits, 2 core proteins and 5 low-molecular weight proteins. Cytochrome b-c1 complex is a homodimer. The cofactor is heme b.

It localises to the mitochondrion inner membrane. In terms of biological role, component of the ubiquinol-cytochrome c reductase complex (complex III or cytochrome b-c1 complex) that is part of the mitochondrial respiratory chain. The b-c1 complex mediates electron transfer from ubiquinol to cytochrome c. Contributes to the generation of a proton gradient across the mitochondrial membrane that is then used for ATP synthesis. In Strobilurus tenacellus, this protein is Cytochrome b (COB).